A 662-amino-acid polypeptide reads, in one-letter code: MAAENEASQESALGAYSPVDYMSITSFPRLPEDEPAPAAPLRGRKDEDAFLGDPDTDPDSFLKSARLQRLPSSSSEMGSQDGSPLRETRKDPFSAAAAECSCRQDGLTVIVTACLTFATGVTVALVMQIYFGDPQIFQQGAVVTDASCCTALGMEVLSKQGSSVDAAVAAALCLGIVAPHSSGLGGGGVMLVHDIRRNESHLIDFRESAPGALREEALQRSWDTKPGLLVGVPGMVKGLYEAHQLYGRLPWSQVLAFAAAVAQDGFNVTHDLAHALAEQLPPNASDRFLETFLPLGHPPLPGSLLRRPDLAEVLDILGISGPAAFYNGGNLTLEMVAEVQHAGGVMTEEDFSNYSALTEKPVCGVYRGHLVLSPPPPHTGPALISALNILEGFNLTSLVSREQALHWVAETLKIALALASRLGDPVYDSTISESMDDMLSKVEAANFRGHISDSQAAPAPLLPVYELDGAPTAAQVLVMGPDDFIVAMVSSLNRPFGSGLLTPSGILLNSQMLDFSWPNRTANHSAPSLENSVQPGKRPLSFLLPTVVRPAEGLCGTYLALGANGAARGLSGLTQVLLNVLTLNRNLSDSLARGRLHPDLQSNVLQVDSEFTEEEIEFLEARGHHVEKVDVLSWVHGSRRTNNFIIGVKDPRSLDATGASIL.

At 1 to 106 the chain is on the cytoplasmic side; the sequence is MAAENEASQE…AAECSCRQDG (106 aa). Residues S17, S72, S79, and S83 each carry the phosphoserine modification. Residues 26 to 90 are disordered; it reads SFPRLPEDEP…DGSPLRETRK (65 aa). Residues 72–83 are compositionally biased toward low complexity; that stretch reads SSSSEMGSQDGS. A helical; Signal-anchor for type II membrane protein transmembrane segment spans residues 107-127; that stretch reads LTVIVTACLTFATGVTVALVM. Topologically, residues 128 to 662 are extracellular; that stretch reads QIYFGDPQIF…SLDATGASIL (535 aa). N-linked (GlcNAc...) asparagine glycosylation is found at N198, N267, N283, N330, N353, N394, N519, N523, and N586.

It belongs to the gamma-glutamyltransferase family. In terms of assembly, heterodimer composed of the light and heavy chains. The active site is located in the light chain. Post-translationally, cleaved by autocatalysis into a large and a small subunit and the autocatalytic cleavage is essential to the functional activation of the enzyme.

The protein resides in the membrane. The catalysed reaction is an N-terminal (5-L-glutamyl)-[peptide] + an alpha-amino acid = 5-L-glutamyl amino acid + an N-terminal L-alpha-aminoacyl-[peptide]. The enzyme catalyses glutathione + H2O = L-cysteinylglycine + L-glutamate. It carries out the reaction an S-substituted glutathione + H2O = an S-substituted L-cysteinylglycine + L-glutamate. Its pathway is sulfur metabolism; glutathione metabolism. In terms of biological role, hydrolyzes and transfers gamma-glutamyl moieties from glutathione and other gamma-glutamyl compounds to acceptors. The protein is Glutathione hydrolase 7 of Rattus norvegicus (Rat).